Reading from the N-terminus, the 127-residue chain is UPF0738 protein Bsph_1225 (127 aa).

The protein belongs to the UPF0738 family.

The protein is UPF0738 protein Bsph_1225 of Lysinibacillus sphaericus (strain C3-41).